We begin with the raw amino-acid sequence, 370 residues long: Gibberellin 3-beta-dioxygenase 2-2 (370 aa).

Residues 205 to 306 (MTATMHLNWY…RISLGYFLGP (102 aa)) enclose the Fe2OG dioxygenase domain. Residues H229, D231, and H287 each contribute to the Fe cation site. The active site involves R297.

Belongs to the iron/ascorbate-dependent oxidoreductase family. GA3OX subfamily. The cofactor is L-ascorbate. It depends on Fe cation as a cofactor.

It carries out the reaction gibberellin A20 + 2-oxoglutarate + O2 = gibberellin A1 + succinate + CO2. In terms of biological role, converts the inactive gibberellin precursors GA9 and GA20 in the bioactives gibberellins GA4 and GA1. The polypeptide is Gibberellin 3-beta-dioxygenase 2-2 (GA3ox2-2) (Triticum aestivum (Wheat)).